Here is a 124-residue protein sequence, read N- to C-terminus: Small ribosomal subunit protein uS13 (124 aa).

Residues 94–124 (RGLPVRGQRTKTNARTRKGPKRTIAGKKKAR) are disordered.

This sequence belongs to the universal ribosomal protein uS13 family. Part of the 30S ribosomal subunit. Forms a loose heterodimer with protein S19. Forms two bridges to the 50S subunit in the 70S ribosome.

Functionally, located at the top of the head of the 30S subunit, it contacts several helices of the 16S rRNA. In the 70S ribosome it contacts the 23S rRNA (bridge B1a) and protein L5 of the 50S subunit (bridge B1b), connecting the 2 subunits; these bridges are implicated in subunit movement. Contacts the tRNAs in the A and P-sites. The protein is Small ribosomal subunit protein uS13 of Mycolicibacterium vanbaalenii (strain DSM 7251 / JCM 13017 / BCRC 16820 / KCTC 9966 / NRRL B-24157 / PYR-1) (Mycobacterium vanbaalenii).